Here is a 129-residue protein sequence, read N- to C-terminus: Small ribosomal subunit protein uS11 (129 aa).

Belongs to the universal ribosomal protein uS11 family. Part of the 30S ribosomal subunit. Interacts with proteins S7 and S18. Binds to IF-3.

Located on the platform of the 30S subunit, it bridges several disparate RNA helices of the 16S rRNA. Forms part of the Shine-Dalgarno cleft in the 70S ribosome. This Maridesulfovibrio salexigens (strain ATCC 14822 / DSM 2638 / NCIMB 8403 / VKM B-1763) (Desulfovibrio salexigens) protein is Small ribosomal subunit protein uS11.